Consider the following 176-residue polypeptide: ATP-dependent protease subunit HslV (176 aa).

Thr-5 is a catalytic residue. Positions 161, 164, and 167 each coordinate Na(+).

This sequence belongs to the peptidase T1B family. HslV subfamily. In terms of assembly, a double ring-shaped homohexamer of HslV is capped on each side by a ring-shaped HslU homohexamer. The assembly of the HslU/HslV complex is dependent on binding of ATP.

Its subcellular location is the cytoplasm. It catalyses the reaction ATP-dependent cleavage of peptide bonds with broad specificity.. With respect to regulation, allosterically activated by HslU binding. Functionally, protease subunit of a proteasome-like degradation complex believed to be a general protein degrading machinery. This chain is ATP-dependent protease subunit HslV, found in Pelotomaculum thermopropionicum (strain DSM 13744 / JCM 10971 / SI).